Consider the following 872-residue polypeptide: Valine--tRNA ligase (872 aa).

The short motif at 49–59 (PNVTGILHIGH) is the 'HIGH' region element. The 'KMSKS' region signature appears at 531–535 (KMSKS). Lys534 contacts ATP. The stretch at 810–871 (PLIARLKKQL…IQQELDLLEQ (62 aa)) forms a coiled coil.

This sequence belongs to the class-I aminoacyl-tRNA synthetase family. ValS type 1 subfamily. In terms of assembly, monomer.

The protein resides in the cytoplasm. It catalyses the reaction tRNA(Val) + L-valine + ATP = L-valyl-tRNA(Val) + AMP + diphosphate. In terms of biological role, catalyzes the attachment of valine to tRNA(Val). As ValRS can inadvertently accommodate and process structurally similar amino acids such as threonine, to avoid such errors, it has a 'posttransfer' editing activity that hydrolyzes mischarged Thr-tRNA(Val) in a tRNA-dependent manner. The protein is Valine--tRNA ligase of Helicobacter pylori (strain J99 / ATCC 700824) (Campylobacter pylori J99).